Consider the following 425-residue polypeptide: Glutamyl-tRNA reductase (425 aa).

Residues 49–52 (TCNR), S109, 114–116 (EGQ), and Q120 each bind substrate. C50 serves as the catalytic Nucleophile. 189–194 (GAGETG) is a binding site for NADP(+).

Belongs to the glutamyl-tRNA reductase family. In terms of assembly, homodimer.

The catalysed reaction is (S)-4-amino-5-oxopentanoate + tRNA(Glu) + NADP(+) = L-glutamyl-tRNA(Glu) + NADPH + H(+). It participates in porphyrin-containing compound metabolism; protoporphyrin-IX biosynthesis; 5-aminolevulinate from L-glutamyl-tRNA(Glu): step 1/2. The protein operates within porphyrin-containing compound metabolism; chlorophyll biosynthesis. Catalyzes the NADPH-dependent reduction of glutamyl-tRNA(Glu) to glutamate 1-semialdehyde (GSA). In Chlorobium phaeobacteroides (strain DSM 266 / SMG 266 / 2430), this protein is Glutamyl-tRNA reductase.